The following is a 1331-amino-acid chain: DNA replication ATP-dependent helicase/nuclease JHS1 (1331 aa).

Residues 1 to 98 (MPPRKKPKSS…DMDQQLTEAS (98 aa)) form a disordered region. The short motif at 2-8 (PPRKKPK) is the Nuclear localization signal element. The segment covering 11–31 (ALKSNKQSSANHSSQPSTFGI) has biased composition (polar residues). Low complexity predominate over residues 40–52 (QNSQSTSNSHTST). The segment covering 57–81 (DQQNVNGLASDTAVLTPQNPLGTSN) has biased composition (polar residues). Basic and acidic residues predominate over residues 82 to 91 (EKPDESKDMD). The segment at 362–811 (ECALYLWDEW…CKLRTGDRVI (450 aa)) is nuclease activity. Cys422, Cys666, Cys669, and Cys675 together coordinate [4Fe-4S] cluster. The tract at residues 812 to 1331 (LRTEVSHLTV…LNLLPGDLKP (520 aa)) is helicase activity. The UvrD-like helicase ATP-binding domain occupies 924 to 1271 (NNDQRQAILK…VRSREKPRSS (348 aa)). 945–952 (GMPGTGKT) serves as a coordination point for ATP.

Belongs to the DNA2/NAM7 helicase family. [4Fe-4S] cluster is required as a cofactor. As to expression, strongly expressed in meristems, including both root and shoot apical meristems (RAM and SAM). Also present in the vasculature and in young floral tissues.

The protein localises to the nucleus. It is found in the chromosome. The enzyme catalyses ATP + H2O = ADP + phosphate + H(+). Essential protein required during embryogenesis. Key enzyme involved in DNA replication and damage repair, shoot apical meristem (SAM) maintenance, and development. Involved in Okazaki fragments processing. Possesses different enzymatic activities, such as single-stranded DNA (ssDNA)-dependent ATPase, 5'-3' helicase and endonuclease activities. While the ATPase and endonuclease activities are well-defined and play a key role in Okazaki fragments processing and DSB repair, the 5'-3' DNA helicase activity is atypical: it cannot load onto its tracking strand internally and has an absolute free 5'-end requirement. The sequence is that of DNA replication ATP-dependent helicase/nuclease JHS1 from Arabidopsis thaliana (Mouse-ear cress).